Reading from the N-terminus, the 279-residue chain is MGILEQLENPKFKATKSEKTLIEYIKSDLDNIIYKSISIIAKESGVGEATITRFTKKLGFNGFQDFKVTLAKEISNKKNTSIINLHVHRDESVTETANKMLKSSINILEQTVKQIDLDLMCKCRDLIMNAKRVYFIGIGYSGIAATDINYKFMRIGFTTVPVTDSHTMVIMSSITNDDDVIVAISNSGTTKEVIKTVKQAKENGTKIITLTEDSDNPLRKLSDYELTYTSAETIFETGSISSKIPQIFLLDLLYTEVIKEMFSEAVEKKIKTTSAILND.

The HTH rpiR-type domain occupies Met-1–Lys-77. Residues Ile-37 to Lys-56 constitute a DNA-binding region (H-T-H motif). An SIS domain is found at Cys-123–Ser-263.

This is an uncharacterized protein from Clostridium perfringens (strain 13 / Type A).